The sequence spans 644 residues: Replication protein E1 (644 aa).

The Nuclear localization signal signature appears at 86 to 88 (KRK). Residues 146 to 177 (QVESQNGDADLNDSESSGVGASSDVSSETDVD) form a disordered region. Over residues 159-173 (SESSGVGASSDVSSE) the composition is skewed to low complexity. The segment at 179–345 (CNTVPLQNIS…LTVLQHSFND (167 aa)) is DNA-binding region. Positions 444–594 (IEFTAFLVAF…FPFDANGNPV (151 aa)) constitute an SF3 helicase domain. Residue 470–477 (GPANTGKS) coordinates ATP. Residue lysine 551 forms a Glycyl lysine isopeptide (Lys-Gly) (interchain with G-Cter in SUMO) linkage.

This sequence belongs to the papillomaviridae E1 protein family. In terms of assembly, can form hexamers. Interacts with E2 protein; this interaction increases E1 DNA binding specificity. Interacts with host DNA polymerase subunit POLA2. Interacts with host single stranded DNA-binding protein RPA1. Interacts with host TOP1; this interaction stimulates the enzymatic activity of TOP1. Post-translationally, phosphorylated. In terms of processing, sumoylated.

Its subcellular location is the host nucleus. The catalysed reaction is Couples ATP hydrolysis with the unwinding of duplex DNA by translocating in the 3'-5' direction.. It carries out the reaction ATP + H2O = ADP + phosphate + H(+). Functionally, ATP-dependent DNA 3'-5' helicase required for initiation of viral DNA replication. It forms a complex with the viral E2 protein. The E1-E2 complex binds to the replication origin which contains binding sites for both proteins. During the initial step, a dimer of E1 interacts with a dimer of protein E2 leading to a complex that binds the viral origin of replication with high specificity. Then, a second dimer of E1 displaces the E2 dimer in an ATP-dependent manner to form the E1 tetramer. Following this, two E1 monomers are added to each half of the site, which results in the formation of two E1 trimers on the viral ori. Subsequently, two hexamers will be created. The double hexamer acts as a bi-directional helicase machinery and unwinds the viral DNA and then recruits the host DNA polymerase to start replication. The chain is Replication protein E1 from Homo sapiens (Human).